The sequence spans 70 residues: uncharacterized protein (70 aa).

The chain crosses the membrane as a helical span at residues 50 to 70; sequence INVVLVLIIALIIFILMLDGV.

It is found in the membrane. This is an uncharacterized protein from Dictyostelium discoideum (Social amoeba).